Consider the following 499-residue polypeptide: Sialic acid-binding Ig-like lectin 8 (499 aa).

The first 16 residues, 1 to 16 (MLLLLLLLPLLWGTKG), serve as a signal peptide directing secretion. Residues 17–363 (MEGDRQYGDG…RPVSQVTLAA (347 aa)) lie on the Extracellular side of the membrane. Residues Y23, 72–75 (RPYQ), R125, and 134–138 (SYKSQ) each bind a carbohydrate. One can recognise an Ig-like V-type domain in the interval 40 to 123 (GLCVHVPCSF…ARKRDKGSYF (84 aa)). Cystine bridges form between C42–C181, C47–C107, and C175–C224. Ig-like C2-type domains follow at residues 157–240 (PDIL…STVR) and 246–344 (PPWN…LSLS). N172 is a glycosylation site (N-linked (GlcNAc...) asparagine). N-linked (GlcNAc...) asparagine glycans are attached at residues N249 and N267. C283 and C328 are oxidised to a cystine. A helical transmembrane segment spans residues 364 to 384 (VGGAGATALAFLSFCIIFIIV). Residues 385–499 (RSCRKKSARP…HNPSSKEVRG (115 aa)) lie on the Cytoplasmic side of the membrane. Residues 410-443 (RGSASQGPLTESWKDGNPLKKPPPAVAPSSGEEG) are disordered. The ITIM motif motif lies at 445-450 (LHYATL). 2 disordered regions span residues 451-470 (SFHK…DSEY) and 478-499 (RETA…EVRG). The SLAM-like motif signature appears at 468-473 (SEYSEI).

The protein belongs to the immunoglobulin superfamily. SIGLEC (sialic acid binding Ig-like lectin) family. In terms of tissue distribution, expressed specifically on blood cells namely basophil, mast cells and eosinophils.

The protein resides in the membrane. Putative adhesion molecule that mediates sialic-acid dependent binding to blood cells. Preferentially binds to alpha-2,3-linked sialic acid. Also binds to alpha-2,6-linked sialic acid. The sialic acid recognition site may be masked by cis interactions with sialic acids on the same cell surface. Recognizes simultaneously epitopes having a terminal N-acetylneuraminic acid (sialic acid) and an underlying 6-O-sulfated galactose. Preferentially binds to Gal-6-sulfated sialyl-Lewis X glycan epitopes. This chain is Sialic acid-binding Ig-like lectin 8 (SIGLEC8), found in Homo sapiens (Human).